The sequence spans 242 residues: Lactate utilization protein A 2 (242 aa).

This sequence belongs to the LutA/YkgE family.

Functionally, is involved in L-lactate degradation and allows cells to grow with lactate as the sole carbon source. In Bacillus cereus (strain Q1), this protein is Lactate utilization protein A 2.